A 163-amino-acid chain; its full sequence is Nucleotide-binding protein RER_17110 (163 aa).

It belongs to the YajQ family.

Its function is as follows. Nucleotide-binding protein. This Rhodococcus erythropolis (strain PR4 / NBRC 100887) protein is Nucleotide-binding protein RER_17110.